The primary structure comprises 338 residues: Secretory carrier-associated membrane protein 1 (338 aa).

The tract at residues 1–63 is disordered; sequence MSDFDSNPFA…PNVPSTQPAI (63 aa). Residue Ser2 is modified to N-acetylserine. A Phosphoserine modification is found at Ser2. The Cytoplasmic portion of the chain corresponds to 2–155; sequence SDFDSNPFAD…QKTVKIMYYL (154 aa). Position 45 is a phosphothreonine (Thr45). The chain crosses the membrane as a helical span at residues 156 to 176; that stretch reads WMFHAVTLFLNIFGCLAWFCV. Over 177-181 the chain is Lumenal; the sequence is DPSRG. A helical membrane pass occupies residues 182-202; sequence VDFGLSILWFLLFTPCSFVCW. Residues 203–217 lie on the Cytoplasmic side of the membrane; sequence YRPLYGAFRSDSSFR. A helical transmembrane segment spans residues 218–238; that stretch reads FFVFFFVYICQFAVHVLQAAG. Residues 239 to 261 lie on the Lumenal side of the membrane; it reads FHNWGNCGWISSLTGLNQSIPVG. Residues 262-282 traverse the membrane as a helical segment; it reads IMMIIIAALFTASAVISLVMF. At 283–338 the chain is on the cytoplasmic side; it reads KKVHGLYRTTGASFEKAQQEFATGVMSNKTVQTAAANAASTAATSAAQNAFKGNQI.

It belongs to the SCAMP family. Interacts with SYNRG, ITSN1 and SLC9A7.

It is found in the golgi apparatus. Its subcellular location is the trans-Golgi network membrane. The protein resides in the recycling endosome membrane. Functions in post-Golgi recycling pathways. Acts as a recycling carrier to the cell surface. This is Secretory carrier-associated membrane protein 1 (SCAMP1) from Sus scrofa (Pig).